The following is a 147-amino-acid chain: Mediator of RNA polymerase II transcription subunit 10 (147 aa).

It belongs to the Mediator complex subunit 10 family. As to quaternary structure, component of the Mediator complex.

The protein localises to the nucleus. In terms of biological role, component of the Mediator complex, a coactivator involved in the regulated transcription of nearly all RNA polymerase II-dependent genes. Mediator functions as a bridge to convey information from gene-specific regulatory proteins to the basal RNA polymerase II transcription machinery. Mediator is recruited to promoters by direct interactions with regulatory proteins and serves as a scaffold for the assembly of a functional preinitiation complex with RNA polymerase II and the general transcription factors. This Debaryomyces hansenii (strain ATCC 36239 / CBS 767 / BCRC 21394 / JCM 1990 / NBRC 0083 / IGC 2968) (Yeast) protein is Mediator of RNA polymerase II transcription subunit 10 (NUT2).